The primary structure comprises 95 residues: Large ribosomal subunit protein bL27 (95 aa).

Positions 1 to 6 (MKLQLF) are excised as a propeptide. The tract at residues 1–25 (MKLQLFAHKKGVGSSRNGRDSESKR) is disordered.

The protein belongs to the bacterial ribosomal protein bL27 family. Post-translationally, the N-terminus is cleaved by ribosomal processing cysteine protease Prp.

This chain is Large ribosomal subunit protein bL27, found in Thermoanaerobacter pseudethanolicus (strain ATCC 33223 / 39E) (Clostridium thermohydrosulfuricum).